We begin with the raw amino-acid sequence, 303 residues long: Flavin-dependent thymidylate synthase (303 aa).

The segment at 1-21 is disordered; the sequence is MALTSEQRAEIEAQRSEPQLT. In terms of domain architecture, ThyX spans 43-256; that stretch reads GFLRVVDYMG…PATAAAFEEY (214 aa). FAD contacts are provided by residues T89, 112–114, and E120; that span reads RHR. Residues 109–112, 120–124, and R195 each bind dUMP; these read QWIR and EYSAR. The short motif at 112–122 is the ThyX motif element; sequence RHRMASVNEYS. Residues 211 to 213 and H217 each bind FAD; that span reads DLH. R222 contacts dUMP. R222 acts as the Involved in ionization of N3 of dUMP, leading to its activation in catalysis.

This sequence belongs to the thymidylate synthase ThyX family. In terms of assembly, homotetramer. The cofactor is FAD.

It carries out the reaction dUMP + (6R)-5,10-methylene-5,6,7,8-tetrahydrofolate + NADPH + H(+) = dTMP + (6S)-5,6,7,8-tetrahydrofolate + NADP(+). It functions in the pathway pyrimidine metabolism; dTTP biosynthesis. Catalyzes the reductive methylation of 2'-deoxyuridine-5'-monophosphate (dUMP) to 2'-deoxythymidine-5'-monophosphate (dTMP) while utilizing 5,10-methylenetetrahydrofolate (mTHF) as the methyl donor, and NADPH and FADH(2) as the reductant. In Gluconobacter oxydans (strain 621H) (Gluconobacter suboxydans), this protein is Flavin-dependent thymidylate synthase.